The following is a 338-amino-acid chain: MSRLRLLLSDSHDPLFNLAVEECIFRQMDPNQRVLFLWRNANTVVIGRAQNPWKECNTRRMEEDGVTLARRSSGGGAVFHDLGNSCFTFMAGKPEYDKSVSTAIVLDALTRLGVEAFASGRNDLLVATPDGERKVSGSAYRETHDRGFHHGTLLLDADLGRLANYLNPDPKKLAAKGISSVRSRVANLCELLPGIDHPQVSEALQEAFFSHYGERVQPEHISPEQMPDLPGFAETFARQRSWEWNFGHAPAFSHQLDERFGWGGVELHFDVEKGVIGRAQIFSDSLDPAPLDALAARLPGTAYRADALYDLLRQWRSEFAAREAELEELSRWLLAALR.

Positions 29–216 (DPNQRVLFLW…AFFSHYGERV (188 aa)) constitute a BPL/LPL catalytic domain. ATP contacts are provided by residues Arg71, 76 to 79 (GAVF), and Lys134. A (R)-lipoate-binding site is contributed by Lys134.

The protein belongs to the LplA family. As to quaternary structure, monomer.

Its subcellular location is the cytoplasm. It carries out the reaction L-lysyl-[lipoyl-carrier protein] + (R)-lipoate + ATP = N(6)-[(R)-lipoyl]-L-lysyl-[lipoyl-carrier protein] + AMP + diphosphate + H(+). It functions in the pathway protein modification; protein lipoylation via exogenous pathway; protein N(6)-(lipoyl)lysine from lipoate: step 1/2. The protein operates within protein modification; protein lipoylation via exogenous pathway; protein N(6)-(lipoyl)lysine from lipoate: step 2/2. Its function is as follows. Catalyzes both the ATP-dependent activation of exogenously supplied lipoate to lipoyl-AMP and the transfer of the activated lipoyl onto the lipoyl domains of lipoate-dependent enzymes. The sequence is that of Lipoate-protein ligase A from Aeromonas hydrophila subsp. hydrophila (strain ATCC 7966 / DSM 30187 / BCRC 13018 / CCUG 14551 / JCM 1027 / KCTC 2358 / NCIMB 9240 / NCTC 8049).